Reading from the N-terminus, the 341-residue chain is UDP-3-O-(3-hydroxymyristoyl)glucosamine N-acyltransferase (341 aa).

The active-site Proton acceptor is histidine 239.

It belongs to the transferase hexapeptide repeat family. LpxD subfamily. In terms of assembly, homotrimer.

The enzyme catalyses a UDP-3-O-[(3R)-3-hydroxyacyl]-alpha-D-glucosamine + a (3R)-hydroxyacyl-[ACP] = a UDP-2-N,3-O-bis[(3R)-3-hydroxyacyl]-alpha-D-glucosamine + holo-[ACP] + H(+). It carries out the reaction UDP-3-O-[(3R)-3-hydroxytetradecanoyl]-alpha-D-glucosamine + (3R)-hydroxytetradecanoyl-[ACP] = UDP-2-N,3-O-bis[(3R)-3-hydroxytetradecanoyl]-alpha-D-glucosamine + holo-[ACP] + H(+). Its pathway is glycolipid biosynthesis; lipid IV(A) biosynthesis; lipid IV(A) from (3R)-3-hydroxytetradecanoyl-[acyl-carrier-protein] and UDP-N-acetyl-alpha-D-glucosamine: step 3/6. Catalyzes the N-acylation of UDP-3-O-(hydroxytetradecanoyl)glucosamine using 3-hydroxytetradecanoyl-ACP as the acyl donor. Is involved in the biosynthesis of lipid A, a phosphorylated glycolipid that anchors the lipopolysaccharide to the outer membrane of the cell. The polypeptide is UDP-3-O-(3-hydroxymyristoyl)glucosamine N-acyltransferase (Escherichia coli O157:H7).